A 198-amino-acid chain; its full sequence is Peptidyl-tRNA hydrolase (198 aa).

Residue Y17 coordinates tRNA. Catalysis depends on H22, which acts as the Proton acceptor. Residues Y74, N76, and N122 each contribute to the tRNA site.

The protein belongs to the PTH family. In terms of assembly, monomer.

Its subcellular location is the cytoplasm. The catalysed reaction is an N-acyl-L-alpha-aminoacyl-tRNA + H2O = an N-acyl-L-amino acid + a tRNA + H(+). Functionally, hydrolyzes ribosome-free peptidyl-tRNAs (with 1 or more amino acids incorporated), which drop off the ribosome during protein synthesis, or as a result of ribosome stalling. Catalyzes the release of premature peptidyl moieties from peptidyl-tRNA molecules trapped in stalled 50S ribosomal subunits, and thus maintains levels of free tRNAs and 50S ribosomes. In Kineococcus radiotolerans (strain ATCC BAA-149 / DSM 14245 / SRS30216), this protein is Peptidyl-tRNA hydrolase.